We begin with the raw amino-acid sequence, 417 residues long: Phosphoglycerate kinase 2 (417 aa).

N-acetylserine is present on Ser2. Phosphoserine occurs at positions 2 and 4. Lys11 bears the N6-acetyllysine mark. Residues Val23, Asp24, Phe25, Asn26, Gln38, and Arg39 each contribute to the (2R)-3-phosphoglycerate site. Lys48 carries the N6-acetyllysine modification. (2R)-3-phosphoglycerate-binding residues include Ser62, His63, Gly65, and Arg66. N6-acetyllysine occurs at positions 75, 86, and 97. (2R)-3-phosphoglycerate-binding residues include Leu122 and Arg123. N6-acetyllysine occurs at positions 131 and 146. (2R)-3-phosphoglycerate-binding residues include His170 and Arg171. At Tyr196 the chain carries Phosphotyrosine. Lys199 bears the N6-acetyllysine mark. Gly214 is a binding site for ADP. Residue Gly214 participates in CDP binding. AMP is bound by residues Ala215 and Lys216. Position 215 (Ala215) interacts with ATP. Ala215 provides a ligand contact to Mg(2+). The Mg(2+) site is built by Ala218 and Asp219. Asp219 is a CDP binding site. Lys220 provides a ligand contact to AMP. ATP is bound at residue Lys220. Gly238 is an ADP binding site. Gly238 is a CDP binding site. Position 239 (Gly239) interacts with AMP. Gly239 contributes to the ATP binding site. An N6-acetyllysine mark is found at Lys267 and Lys291. Gly313 lines the AMP pocket. Position 313 (Gly313) interacts with ATP. Positions 338 and 343 each coordinate CDP. Phe343 serves as a coordination point for ADP. An AMP-binding site is contributed by Glu344. ATP-binding residues include Glu344, Asp375, and Thr376. Asp375 contributes to the Mg(2+) binding site.

It belongs to the phosphoglycerate kinase family. Monomer. Mg(2+) is required as a cofactor.

The protein resides in the cytoplasm. It carries out the reaction (2R)-3-phosphoglycerate + ATP = (2R)-3-phospho-glyceroyl phosphate + ADP. The protein operates within carbohydrate degradation; glycolysis; pyruvate from D-glyceraldehyde 3-phosphate: step 2/5. Its function is as follows. Essential for sperm motility and male fertility but is not required for the completion of spermatogenesis. The chain is Phosphoglycerate kinase 2 (PGK2) from Macaca fascicularis (Crab-eating macaque).